A 208-amino-acid polypeptide reads, in one-letter code: Small ribosomal subunit protein uS4 (208 aa).

The S4 RNA-binding domain maps to 98-158 (RRLDNVVYRL…EKNRKISVVA (61 aa)).

The protein belongs to the universal ribosomal protein uS4 family. Part of the 30S ribosomal subunit. Contacts protein S5. The interaction surface between S4 and S5 is involved in control of translational fidelity.

One of the primary rRNA binding proteins, it binds directly to 16S rRNA where it nucleates assembly of the body of the 30S subunit. In terms of biological role, with S5 and S12 plays an important role in translational accuracy. The polypeptide is Small ribosomal subunit protein uS4 (Lawsonia intracellularis (strain PHE/MN1-00)).